The chain runs to 93 residues: Exodeoxyribonuclease 7 small subunit (93 aa).

The segment covering 61–75 (IDDNGDEKVYEKQTD) has biased composition (basic and acidic residues). The segment at 61–93 (IDDNGDEKVYEKQTDDPSNNGGGNRGFGSADEQ) is disordered.

It belongs to the XseB family. In terms of assembly, heterooligomer composed of large and small subunits.

The protein localises to the cytoplasm. The catalysed reaction is Exonucleolytic cleavage in either 5'- to 3'- or 3'- to 5'-direction to yield nucleoside 5'-phosphates.. Its function is as follows. Bidirectionally degrades single-stranded DNA into large acid-insoluble oligonucleotides, which are then degraded further into small acid-soluble oligonucleotides. This Limosilactobacillus reuteri (strain DSM 20016) (Lactobacillus reuteri) protein is Exodeoxyribonuclease 7 small subunit.